The sequence spans 144 residues: D-aminoacyl-tRNA deacylase (144 aa).

The short motif at 137 to 138 is the Gly-cisPro motif, important for rejection of L-amino acids element; that stretch reads GP.

The protein belongs to the DTD family. Homodimer.

It is found in the cytoplasm. It catalyses the reaction glycyl-tRNA(Ala) + H2O = tRNA(Ala) + glycine + H(+). The catalysed reaction is a D-aminoacyl-tRNA + H2O = a tRNA + a D-alpha-amino acid + H(+). In terms of biological role, an aminoacyl-tRNA editing enzyme that deacylates mischarged D-aminoacyl-tRNAs. Also deacylates mischarged glycyl-tRNA(Ala), protecting cells against glycine mischarging by AlaRS. Acts via tRNA-based rather than protein-based catalysis; rejects L-amino acids rather than detecting D-amino acids in the active site. By recycling D-aminoacyl-tRNA to D-amino acids and free tRNA molecules, this enzyme counteracts the toxicity associated with the formation of D-aminoacyl-tRNA entities in vivo and helps enforce protein L-homochirality. The sequence is that of D-aminoacyl-tRNA deacylase from Marinomonas sp. (strain MWYL1).